The chain runs to 159 residues: NAD(P)H-quinone oxidoreductase subunit I, chloroplastic (159 aa).

4Fe-4S ferredoxin-type domains follow at residues 55-84 and 95-124; these read GRIHFEFDKCIVCEVCVRVCPINLPVVDWN and KNYSIDFGVCIFCGNCVEYCPTNCLSMTEE. Residues Cys64, Cys67, Cys70, Cys74, Cys104, Cys107, Cys110, and Cys114 each coordinate [4Fe-4S] cluster.

This sequence belongs to the complex I 23 kDa subunit family. As to quaternary structure, NDH is composed of at least 16 different subunits, 5 of which are encoded in the nucleus. It depends on [4Fe-4S] cluster as a cofactor.

The protein localises to the plastid. Its subcellular location is the chloroplast thylakoid membrane. It catalyses the reaction a plastoquinone + NADH + (n+1) H(+)(in) = a plastoquinol + NAD(+) + n H(+)(out). It carries out the reaction a plastoquinone + NADPH + (n+1) H(+)(in) = a plastoquinol + NADP(+) + n H(+)(out). In terms of biological role, NDH shuttles electrons from NAD(P)H:plastoquinone, via FMN and iron-sulfur (Fe-S) centers, to quinones in the photosynthetic chain and possibly in a chloroplast respiratory chain. The immediate electron acceptor for the enzyme in this species is believed to be plastoquinone. Couples the redox reaction to proton translocation, and thus conserves the redox energy in a proton gradient. This Chara vulgaris (Common stonewort) protein is NAD(P)H-quinone oxidoreductase subunit I, chloroplastic.